The chain runs to 953 residues: Protein translocase subunit SecA 1 (953 aa).

Residues Gln83, 101–105 (GEGKT), and Asp490 each bind ATP. The span at 854–867 (AAAAAAKASDSAAK) shows a compositional bias: low complexity. Residues 854–953 (AAAAAAKASD…DRPAKSHRKG (100 aa)) are disordered. The segment covering 929–947 (SRRERREAARKQAKADRPA) has biased composition (basic and acidic residues).

This sequence belongs to the SecA family. In terms of assembly, monomer and homodimer. Part of the essential Sec protein translocation apparatus which comprises SecA, SecYEG and auxiliary proteins SecDF. Other proteins may also be involved.

Its subcellular location is the cell membrane. The protein resides in the cytoplasm. The catalysed reaction is ATP + H2O + cellular proteinSide 1 = ADP + phosphate + cellular proteinSide 2.. Its function is as follows. Part of the Sec protein translocase complex. Interacts with the SecYEG preprotein conducting channel. Has a central role in coupling the hydrolysis of ATP to the transfer of proteins into and across the cell membrane, serving as an ATP-driven molecular motor driving the stepwise translocation of polypeptide chains across the membrane. This is Protein translocase subunit SecA 1 from Mycolicibacterium smegmatis (strain ATCC 700084 / mc(2)155) (Mycobacterium smegmatis).